Consider the following 387-residue polypeptide: 3-ketoacyl-CoA thiolase (387 aa).

Cysteine 91 serves as the catalytic Acyl-thioester intermediate. Catalysis depends on proton acceptor residues histidine 343 and cysteine 373.

It belongs to the thiolase-like superfamily. Thiolase family. As to quaternary structure, heterotetramer of two alpha chains (FadB) and two beta chains (FadA).

Its subcellular location is the cytoplasm. It carries out the reaction an acyl-CoA + acetyl-CoA = a 3-oxoacyl-CoA + CoA. Its pathway is lipid metabolism; fatty acid beta-oxidation. Its function is as follows. Catalyzes the final step of fatty acid oxidation in which acetyl-CoA is released and the CoA ester of a fatty acid two carbons shorter is formed. This Escherichia coli O1:K1 / APEC protein is 3-ketoacyl-CoA thiolase.